The following is a 152-amino-acid chain: 3-hydroxyacyl-[acyl-carrier-protein] dehydratase FabZ (152 aa).

The active site involves histidine 57.

The protein belongs to the thioester dehydratase family. FabZ subfamily.

The protein resides in the cytoplasm. It catalyses the reaction a (3R)-hydroxyacyl-[ACP] = a (2E)-enoyl-[ACP] + H2O. Functionally, involved in unsaturated fatty acids biosynthesis. Catalyzes the dehydration of short chain beta-hydroxyacyl-ACPs and long chain saturated and unsaturated beta-hydroxyacyl-ACPs. This Bradyrhizobium sp. (strain BTAi1 / ATCC BAA-1182) protein is 3-hydroxyacyl-[acyl-carrier-protein] dehydratase FabZ.